The chain runs to 387 residues: 1-deoxy-D-xylulose 5-phosphate reductoisomerase (387 aa).

NADPH-binding residues include T11, G12, S13, I14, G37, R38, Q39, and N127. K128 contributes to the 1-deoxy-D-xylulose 5-phosphate binding site. E129 provides a ligand contact to NADPH. D153 provides a ligand contact to Mn(2+). The 1-deoxy-D-xylulose 5-phosphate site is built by S154, E155, S179, and H200. E155 lines the Mn(2+) pocket. G206 is an NADPH binding site. Residues S213, N218, K219, and E222 each contribute to the 1-deoxy-D-xylulose 5-phosphate site. A Mn(2+)-binding site is contributed by E222.

It belongs to the DXR family. Requires Mg(2+) as cofactor. The cofactor is Mn(2+).

It catalyses the reaction 2-C-methyl-D-erythritol 4-phosphate + NADP(+) = 1-deoxy-D-xylulose 5-phosphate + NADPH + H(+). The protein operates within isoprenoid biosynthesis; isopentenyl diphosphate biosynthesis via DXP pathway; isopentenyl diphosphate from 1-deoxy-D-xylulose 5-phosphate: step 1/6. Its function is as follows. Catalyzes the NADPH-dependent rearrangement and reduction of 1-deoxy-D-xylulose-5-phosphate (DXP) to 2-C-methyl-D-erythritol 4-phosphate (MEP). The sequence is that of 1-deoxy-D-xylulose 5-phosphate reductoisomerase from Symbiobacterium thermophilum (strain DSM 24528 / JCM 14929 / IAM 14863 / T).